The following is a 273-amino-acid chain: Formamidopyrimidine-DNA glycosylase (273 aa).

The active-site Schiff-base intermediate with DNA is the P2. The active-site Proton donor is the E3. Residue K58 is the Proton donor; for beta-elimination activity of the active site. DNA-binding residues include H91, R110, and R153. The segment at 238–272 (KVYGKEGQPCPRCGEDFVKIKICGRGTTYCLHCQK) adopts an FPG-type zinc-finger fold. R262 serves as the catalytic Proton donor; for delta-elimination activity.

This sequence belongs to the FPG family. In terms of assembly, monomer. It depends on Zn(2+) as a cofactor.

It carries out the reaction Hydrolysis of DNA containing ring-opened 7-methylguanine residues, releasing 2,6-diamino-4-hydroxy-5-(N-methyl)formamidopyrimidine.. The catalysed reaction is 2'-deoxyribonucleotide-(2'-deoxyribose 5'-phosphate)-2'-deoxyribonucleotide-DNA = a 3'-end 2'-deoxyribonucleotide-(2,3-dehydro-2,3-deoxyribose 5'-phosphate)-DNA + a 5'-end 5'-phospho-2'-deoxyribonucleoside-DNA + H(+). In terms of biological role, involved in base excision repair of DNA damaged by oxidation or by mutagenic agents. Acts as a DNA glycosylase that recognizes and removes damaged bases. Has a preference for oxidized purines, such as 7,8-dihydro-8-oxoguanine (8-oxoG). Has AP (apurinic/apyrimidinic) lyase activity and introduces nicks in the DNA strand. Cleaves the DNA backbone by beta-delta elimination to generate a single-strand break at the site of the removed base with both 3'- and 5'-phosphates. This is Formamidopyrimidine-DNA glycosylase from Lactobacillus delbrueckii subsp. bulgaricus (strain ATCC BAA-365 / Lb-18).